The sequence spans 342 residues: Oxygen-dependent coproporphyrinogen-III oxidase (342 aa).

A substrate-binding site is contributed by serine 98. 2 residues coordinate a divalent metal cation: histidine 102 and histidine 112. Histidine 112 acts as the Proton donor in catalysis. 114–116 (NYR) provides a ligand contact to substrate. Positions 146 and 176 each coordinate a divalent metal cation. The tract at residues 266–301 (YVEFNLVWDRGTIFGLQTNGRTESILMSLPPLARWE) is important for dimerization.

Belongs to the aerobic coproporphyrinogen-III oxidase family. As to quaternary structure, homodimer. The cofactor is a divalent metal cation.

The protein resides in the cytoplasm. It carries out the reaction coproporphyrinogen III + O2 + 2 H(+) = protoporphyrinogen IX + 2 CO2 + 2 H2O. Its pathway is porphyrin-containing compound metabolism; protoporphyrin-IX biosynthesis; protoporphyrinogen-IX from coproporphyrinogen-III (O2 route): step 1/1. Functionally, involved in the heme and chlorophyll biosynthesis. Catalyzes the aerobic oxidative decarboxylation of propionate groups of rings A and B of coproporphyrinogen-III to yield the vinyl groups in protoporphyrinogen-IX. This chain is Oxygen-dependent coproporphyrinogen-III oxidase, found in Prochlorococcus marinus (strain AS9601).